The sequence spans 413 residues: Gamma-lactamase FDB1 (413 aa).

Zn(2+)-binding residues include His126, His128, Asp130, His131, His211, Asp235, and His323.

The protein belongs to the metallo-beta-lactamase superfamily.

It participates in xenobiotic degradation. Functionally, gamma-lactamase; part of the Fusarium detoxification of benzoxazolinone cluster involved in the degradation of benzoxazolinones produced by the host plant. Maize, wheat, and rye produce the 2 benzoxazinone phytoanticipins 2,4-dihy-droxy-7-methoxy-1,4-benzoxazin-3-one (DIMBOA) and 2,4-dihydroxy-1,4-benzoxazin-3-one (DIBOA) that, due to their inherent instability once released, spontaneously degrade to the more stable corresponding benzoxazolinones, 6-methoxy-2-benzoxazolinone (MBOA) and 2-benzoxazolinone (BOA), respectively. The first step in the detoxification of benzoxazolinones involves the hydrolysis of the cyclic ester bond of benzoxazolinones by the gamma-lactamase FDB1 to aminophenols. FDB1 is able to convert BOA into 2-aminophenol (2-AP), as well as MBOA into 5-methoxy-2-aminophenol (2-AMP). The N-malonyltransferase FDB2 then metabolizes aminophenols via N-malonylation to non-toxic malonamic acids. FDB2 converts 2-AP into N-(2-hydroxyphenyl) malonamic acid (HPMA) and 2-AMP into N-(2-hydroxy-4-methoxyphenyl) malonamic acid (HMPMA). The cluster also contains 2 transcription factors (FDB3 and FPSE_08121), an aldo-keto reductase (FPSE_08125) that possibly associates with a ketone component of BOA and MBOA degradation, an esterase (FPSE_08126), an acyl-CoA transferase (FPSE_08120), a solute carrier protein (FPSE_08119) and a transmembrane transporter (FPSE_08127) proposed to shuttle metabolites of benzoxazolinone degradation. The chain is Gamma-lactamase FDB1 from Fusarium pseudograminearum (strain CS3096) (Wheat and barley crown-rot fungus).